Reading from the N-terminus, the 1404-residue chain is Proteoglycan 4 (1404 aa).

The signal sequence occupies residues 1–24; it reads MAWKTLPIYLLLLLSVFVIQQVSS. SMB domains are found at residues 26-69 and 66-108; these read DLSS…AELS and AELS…AEVH. Cystine bridges form between Cys-30–Cys-34, Cys-30–Cys-46, Cys-34–Cys-64, Cys-44–Cys-46, Cys-44–Cys-57, Cys-50–Cys-56, Cys-57–Cys-64, Cys-70–Cys-74, Cys-70–Cys-86, Cys-74–Cys-104, Cys-84–Cys-86, Cys-84–Cys-97, Cys-90–Cys-96, and Cys-97–Cys-104. Residues 111–966 are disordered; the sequence is TSPPSSKKAP…TTQVTSTTTQ (856 aa). Residues Ser-123 and Ser-136 are each glycosylated (O-linked (GalNAc...) serine). Residues 132–146 show a composition bias toward basic residues; the sequence is TTKRSPKPPNKKKTK. Over residues 166 to 177 the composition is skewed to low complexity; sequence SSSSSSSSSSSS. Over residues 193-205 the composition is skewed to basic and acidic residues; it reads ELQKKLKVKDNKK. N-linked (GlcNAc...) asparagine glycosylation occurs at Asn-206. A compositionally biased stretch (polar residues) spans 235-252; that stretch reads TPDTSTTQHNKVSTSPKI. O-linked (GalNAc...) threonine glycosylation is found at Thr-240 and Thr-253. Residues 266-276 are compositionally biased toward polar residues; sequence PNSDTSKETSL. Residues Thr-277, Thr-291, and Thr-305 are each glycosylated (O-linked (GalNAc...) threonine). Ser-306 is a glycosylation site (O-linked (GalNAc...) serine). An O-linked (GalNAc...) threonine glycan is attached at Thr-310. A glycan (O-linked (GalNAc...) serine) is linked at Ser-317. Thr-324, Thr-332, and Thr-338 each carry an O-linked (GalNAc...) threonine glycan. Low complexity-rich tracts occupy residues 329–348 and 356–405; these read AKPTPKAETTTKGPALTTPK and KEPA…KEPA. Repeat unit 1 spans residues 348 to 355; the sequence is KEPTPTTP. The 59 X 8 AA repeats of K-X-P-X-P-T-T-X stretch occupies residues 348–855; the sequence is KEPTPTTPKE…TPETPPPTTS (508 aa). One copy of the 2; approximate repeat lies at 356–363; it reads KEPASTTP. Copy 3 of the repeat occupies 364 to 371; the sequence is KEPTPTTI. A glycan (O-linked (GalNAc...) threonine) is linked at Thr-367. The stretch at 372–378 is one 4; approximate repeat; the sequence is KSAPTTP. Ser-373 is a glycosylation site (O-linked (GalNAc...) serine). 3 O-linked (GalNAc...) threonine glycosylation sites follow: Thr-376, Thr-384, and Thr-385. Repeat 5 spans residues 379-386; it reads KEPAPTTT. The stretch at 387–393 is one 6; approximate repeat; that stretch reads KSAPTTP. O-linked (GalNAc...) serine glycosylation occurs at Ser-388. Residues Thr-391, Thr-399, Thr-400, Thr-407, Thr-408, Thr-415, and Thr-423 are each glycosylated (O-linked (GalNAc...) threonine). 4 consecutive repeat copies span residues 394 to 401, 402 to 409, 410 to 417, and 418 to 425. Low complexity predominate over residues 413 to 431; that stretch reads APTTTKEPAPTTTKSAPTT. Residues 426–432 form an 11; approximate repeat; sequence KSAPTTP. An O-linked (GalNAc...) serine glycan is attached at Ser-427. O-linked (GalNAc...) threonine glycosylation is found at Thr-430, Thr-438, Thr-439, Thr-446, Thr-447, Thr-454, and Thr-455. Pro residues-rich tracts occupy residues 432–467 and 476–506; these read PKEPAPTTPKKPAPTTPKEPAPTTPKEPTPTTPKEP and PTTPKEPAPTAPKKPAPTTPKEPAPTTPKEP. 4 tandem repeats follow at residues 433–440, 441–448, 449–456, and 457–464. The 16; approximate repeat unit spans residues 465–471; the sequence is KEPAPTT. The stretch at 472-479 is repeat 17; the sequence is KEPAPTTP. Thr-477, Thr-478, Thr-485, Thr-493, Thr-494, Thr-501, Thr-502, and Thr-509 each carry an O-linked (GalNAc...) threonine glycan. Residues 480-487 form an 18; approximate repeat; sequence KEPAPTAP. A 19; approximate repeat occupies 488 to 495; sequence KKPAPTTP. A run of 4 repeats spans residues 496–503, 504–511, 512–519, and 520–527. Over residues 523–561 the composition is skewed to low complexity; sequence APTTTKSAPTTTKEPAPTTTKSAPTTPKEPSPTTTKEPA. Residue Thr-525 is glycosylated (O-linked (GalNAc...) threonine). One copy of the 24; approximate repeat lies at 528 to 534; the sequence is KSAPTTT. Residue Ser-529 is glycosylated (O-linked (GalNAc...) serine). 3 O-linked (GalNAc...) threonine glycosylation sites follow: Thr-532, Thr-540, and Thr-541. Repeat unit 25 spans residues 535–542; sequence KEPAPTTT. The 26; approximate repeat unit spans residues 543–549; the sequence is KSAPTTP. Repeat copies occupy residues 550–557, 558–565, 566–573, 574–581, 582–589, and 590–597. Ser-553 is a glycosylation site (O-linked (GalNAc...) serine). O-linked (GalNAc...) threonine glycans are attached at residues Thr-555, Thr-563, Thr-564, Thr-571, Thr-572, Thr-579, Thr-580, Thr-587, Thr-588, Thr-595, Thr-603, Thr-604, Thr-611, Thr-612, Thr-616, Thr-619, and Thr-627. Over residues 562–592 the composition is skewed to pro residues; the sequence is PTTPKEPAPTTPKKPAPTTPKEPAPTTPKEP. The stretch at 598 to 605 is one 33; approximate repeat; that stretch reads KKPAPTTP. The segment covering 602–611 has biased composition (pro residues); it reads PTTPKEPAPT. Repeat unit 34 spans residues 606-613; sequence KEPAPTTP. Residues 612–636 show a composition bias toward low complexity; the sequence is TPKETAPTTPKKLTPTTPEKLAPTT. One copy of the 35; approximate repeat lies at 614-621; sequence KETAPTTP. The stretch at 622–629 is one 36; approximate repeat; that stretch reads KKLTPTTP. Residues 638–645 form a 37; approximate repeat; sequence EKPAPTTP. Over residues 653-667 the composition is skewed to pro residues; that stretch reads PEEPTPTTPEEPAPT. Residues 662–669 form a 38; approximate repeat; it reads EEPAPTTP. Thr-676, Thr-683, Thr-684, Thr-691, Thr-692, Thr-699, Thr-700, Thr-704, and Thr-707 each carry an O-linked (GalNAc...) threonine glycan. The span at 677-699 shows a compositional bias: pro residues; it reads PKEPAPTTPKEPAPTTPKEPAPT. 3 tandem repeats follow at residues 678-685, 686-693, and 694-701. Residues 700–721 show a composition bias toward low complexity; it reads TPKETAPTTPKGTAPTTLKEPA. One copy of the 42; approximate repeat lies at 702–709; sequence KETAPTTP. Residues 710–717 form a 43; approximate repeat; sequence KGTAPTTL. Residues 718-725 form repeat 44; sequence KEPAPTTP. 3 O-linked (GalNAc...) threonine glycosylation sites follow: Thr-723, Thr-724, and Thr-736. Positions 728–761 are enriched in low complexity; it reads PAPKELAPTTTKEPTSTTSDKPAPTTPKGTAPTT. One copy of the 45; approximate repeat lies at 731 to 738; that stretch reads KELAPTTT. A 46; approximate repeat occupies 739 to 746; that stretch reads KEPTSTTS. The stretch at 747-754 is one 47; approximate repeat; that stretch reads DKPAPTTP. A 48; approximate repeat occupies 755–762; that stretch reads KGTAPTTP. The span at 762–776 shows a compositional bias: pro residues; the sequence is PKEPAPTTPKEPAPT. 2 consecutive repeat copies span residues 763 to 770 and 771 to 778. O-linked (GalNAc...) threonine glycans are attached at residues Thr-768, Thr-769, Thr-776, and Thr-777. Over residues 777–790 the composition is skewed to low complexity; sequence TPKGTAPTTLKEPA. One copy of the 51; approximate repeat lies at 779–786; the sequence is KGTAPTTL. Repeat unit 52 spans residues 787-794; it reads KEPAPTTP. O-linked (GalNAc...) threonine glycans are attached at residues Thr-792, Thr-793, and Thr-805. Low complexity predominate over residues 797-830; that stretch reads PAPKELAPTTTKGPTSTTSDKPAPTTPKETAPTT. A 53; approximate repeat occupies 800–807; sequence KELAPTTT. A 54; approximate repeat occupies 808–815; sequence KGPTSTTS. O-linked (GalNAc...) serine glycosylation occurs at Ser-812. A 55; approximate repeat occupies 816–823; it reads DKPAPTTP. The 56; approximate repeat unit spans residues 824–831; sequence KETAPTTP. 3 O-linked (GalNAc...) threonine glycosylation sites follow: Thr-829, Thr-837, and Thr-838. The span at 831-853 shows a compositional bias: pro residues; sequence PKEPAPTTPKKPAPTTPETPPPT. A run of 2 repeats spans residues 832–839 and 840–847. Residues 848-855 form a 59; approximate repeat; that stretch reads ETPPPTTS. Over residues 854-866 the composition is skewed to low complexity; sequence TSEVSTPTTTKEP. The O-linked (GalNAc...) serine glycan is linked to Ser-892. Positions 899-914 are enriched in low complexity; it reads PTTKTPAATKPEMTTT. An O-linked (GalNAc...) threonine glycan is attached at Thr-900. A compositionally biased stretch (basic and acidic residues) spans 915–926; sequence AKDKTTERDLRT. Low complexity predominate over residues 927 to 966; the sequence is TPETTTAAPKMTKETATTTEKTTESKITATTTQVTSTTTQ. Residues Thr-930 and Thr-931 are each glycosylated (O-linked (GalNAc...) threonine). O-linked (GalNAc...) serine glycosylation is present at Ser-962. Thr-963, Thr-968, Thr-975, Thr-978, Thr-979, and Thr-980 each carry an O-linked (GalNAc...) threonine glycan. The interval 992-1104 is disordered; it reads ITTTEIMNKP…EDAGGAEGET (113 aa). A compositionally biased stretch (basic and acidic residues) spans 999–1012; sequence NKPEETAKPKDRAT. Residues 1026–1047 are compositionally biased toward basic residues; it reads KAPKKPTSTKKPKTMPRVRKPK. Thr-1039 is a glycosylation site (O-linked (GalNAc...) threonine). Residues 1048-1060 show a composition bias toward low complexity; it reads TTPTPRKMTSTMP. The span at 1073–1085 shows a compositional bias: polar residues; that stretch reads LQTTTRPNQTPNS. The cysteines at positions 1146 and 1403 are disulfide-linked. Hemopexin repeat units lie at residues 1148–1191 and 1192–1239; these read GKPV…VWGI and PSPI…FGGL. Asn-1159 is a glycosylation site (N-linked (GlcNAc...) asparagine). An O-linked (GalNAc...) threonine glycan is attached at Thr-1161.

As to quaternary structure, homodimer; disulfide-linked. Post-translationally, N-glycosylated. O-glycosylated; contains glycosaminoglycan chondroitin sulfate and keratan sulfate. O-glycosylated with sialylated oligosaccharides which are predominantly represented by the monosialylated core type I structure, NeuNAcalpha2-3Galbeta1-3GalNAc, with smaller amounts of disialylated O-glycans. In terms of processing, the disulfide bond between Cys-1146 and Cys-1403 is essential for protein cleavage. Post-translationally, proteolytically cleaved by cathepsin CTSG. Highly expressed in synovial tissue, cartilage and liver and weakly in heart and lung. Isoform B is expressed in kidney, lung, liver, heart and brain. Isoform C and isoform D are widely expressed.

It is found in the secreted. Its function is as follows. Plays a role in boundary lubrication within articulating joints. Prevents protein deposition onto cartilage from synovial fluid by controlling adhesion-dependent synovial growth and inhibiting the adhesion of synovial cells to the cartilage surface. Isoform F plays a role as a growth factor acting on the primitive cells of both hematopoietic and endothelial cell lineages. This chain is Proteoglycan 4 (PRG4), found in Homo sapiens (Human).